A 1597-amino-acid chain; its full sequence is Glucosyltransferase-I (1597 aa).

An N-terminal signal peptide occupies residues Met1 to Ala38. The disordered stretch occupies residues Leu52–Lys120. The span at Thr53 to Thr114 shows a compositional bias: low complexity. Cell wall-binding repeat units follow at residues Met157–Val176 and Lys178–Tyr197. Positions Thr200–Val1050 are catalytic; approximate. 22 Cell wall-binding repeats span residues Thr1089–Met1108, Val1109–Ala1128, Arg1130–Arg1150, Glu1152–Ala1172, Leu1173–Gln1191, Lys1193–Ala1214, Thr1216–Ala1236, Val1237–Gln1256, Lys1258–Met1279, Thr1281–Ala1301, Val1302–Gln1321, Lys1323–Glu1343, Gln1344–Ala1365, Gln1366–Ser1380, Leu1415–Gln1434, Lys1436–Gln1457, Phe1459–Ala1478, Lys1485–Tyr1505, Gly1508–Val1527, Leu1528–Gln1547, Lys1549–Met1570, and Thr1572–Ala1591. Residues Leu1099 to Asn1597 form a glucan-binding; approximate region.

The protein belongs to the glycosyl hydrolase 70 family.

It localises to the secreted. It carries out the reaction [(1-&gt;6)-alpha-D-glucosyl](n) + sucrose = [(1-&gt;6)-alpha-D-glucosyl](n+1) + D-fructose. Functionally, production of extracellular glucans, that are thought to play a key role in the development of the dental plaque because of their ability to adhere to smooth surfaces and mediate the aggregation of bacterial cells and food debris. The protein is Glucosyltransferase-I (gtfI) of Streptococcus downei (Streptococcus sobrinus).